Here is a 576-residue protein sequence, read N- to C-terminus: MKAGERPKLVRGVRQESRRFRLLVIVVGFFLVSLTFVFVSKPDAILFSLNGKLPVEQAPTSILIQQKVNEPSGESRKTSTDALRGDPKVVDDEADAKPKGTGGGSEEEEGRVLSEPDPTSGMMEPTHNKDGNGHKSHQETLGGGGDGESKGNDEEGEHAEQKHKVTLPTVSNYTIHDAAEDTENAKQEGMNNVQQGSKPLCDFSNFRANVCEMRGDVRIHPTATSVLFMEPEGSQRDEVWKIKPYPRKGDEFCLSHITEVTVKSSKVAPECTKYHDVPAVIFSLTGYTGNLFHDFTDVLVPLFTTASEFNGEVQFLITDMALWWTIKYQTVLQKLSKYPVIDFSKDDQVHCFKHAIVGLHAYMEFTIDSTKAPHNYSMADFNRFMRGAYSLGRDSVTVLGEYPKIKPRLLIIKRHRTRMFLNLDEIISMAEELGFEVVIDEANVSSDISRFARLVNSVDVMMGVHGAGLTNCVFLPQHATLIQIVPWGGLDWISRTDFGNPAELMGLRYKQYSIGVDESSLTDQYPRDHEIFKNPISFHQRGFDFIRQTFMDKQNVKLDCKRFRPILLEALDNLNP.

At 1–19 (MKAGERPKLVRGVRQESRR) the chain is on the cytoplasmic side. The helical; Signal-anchor for type II membrane protein transmembrane segment at 20–40 (FRLLVIVVGFFLVSLTFVFVS) threads the bilayer. Residues 41–576 (KPDAILFSLN…LLEALDNLNP (536 aa)) lie on the Lumenal side of the membrane. Residues 64–171 (IQQKVNEPSG…KHKVTLPTVS (108 aa)) form a disordered region. Composition is skewed to basic and acidic residues over residues 73 to 98 (GESRKTSTDALRGDPKVVDDEADAKP), 126 to 138 (THNKDGNGHKSHQ), and 147 to 163 (GESKGNDEEGEHAEQKH). N-linked (GlcNAc...) asparagine glycans are attached at residues asparagine 172, asparagine 375, and asparagine 443.

The protein belongs to the glycosyltransferase 61 family.

It localises to the golgi apparatus membrane. Its pathway is glycan metabolism. Its function is as follows. Glycosyltransferase involved in the arabinosylation of xylan, the major hemicellulose (non-cellulosic component) of primary and secondary walls of angiosperms. Possesses alpha-1,3-arabinosyltransferase activity, transferring an arabinofuranose residue to the xylan backbone. In Oryza sativa subsp. japonica (Rice), this protein is Alpha-1,3-arabinosyltransferase XAT3.